Here is a 329-residue protein sequence, read N- to C-terminus: DNA-directed RNA polymerase subunit alpha (329 aa).

Residues 1-235 form an alpha N-terminal domain (alpha-NTD) region; it reads MQGSVTEFLK…EQLDAFVDLR (235 aa). The tract at residues 249–329 is alpha C-terminal domain (alpha-CTD); the sequence is FDPILLRPVD…NWPPASIAED (81 aa).

This sequence belongs to the RNA polymerase alpha chain family. As to quaternary structure, homodimer. The RNAP catalytic core consists of 2 alpha, 1 beta, 1 beta' and 1 omega subunit. When a sigma factor is associated with the core the holoenzyme is formed, which can initiate transcription.

It carries out the reaction RNA(n) + a ribonucleoside 5'-triphosphate = RNA(n+1) + diphosphate. Its function is as follows. DNA-dependent RNA polymerase catalyzes the transcription of DNA into RNA using the four ribonucleoside triphosphates as substrates. The protein is DNA-directed RNA polymerase subunit alpha of Histophilus somni (strain 129Pt) (Haemophilus somnus).